The chain runs to 134 residues: Transcription antitermination protein NusB (134 aa).

The protein belongs to the NusB family.

Involved in transcription antitermination. Required for transcription of ribosomal RNA (rRNA) genes. Binds specifically to the boxA antiterminator sequence of the ribosomal RNA (rrn) operons. In Shewanella oneidensis (strain ATCC 700550 / JCM 31522 / CIP 106686 / LMG 19005 / NCIMB 14063 / MR-1), this protein is Transcription antitermination protein NusB.